We begin with the raw amino-acid sequence, 309 residues long: Aspartate carbamoyltransferase catalytic subunit (309 aa).

The carbamoyl phosphate site is built by Arg55 and Thr56. Residue Lys85 participates in L-aspartate binding. Carbamoyl phosphate-binding residues include Arg106, His135, and Gln138. Residues Arg168 and Arg230 each contribute to the L-aspartate site. Residues Leu268 and Pro269 each contribute to the carbamoyl phosphate site.

Belongs to the aspartate/ornithine carbamoyltransferase superfamily. ATCase family. As to quaternary structure, heterododecamer (2C3:3R2) of six catalytic PyrB chains organized as two trimers (C3), and six regulatory PyrI chains organized as three dimers (R2).

The catalysed reaction is carbamoyl phosphate + L-aspartate = N-carbamoyl-L-aspartate + phosphate + H(+). It participates in pyrimidine metabolism; UMP biosynthesis via de novo pathway; (S)-dihydroorotate from bicarbonate: step 2/3. Catalyzes the condensation of carbamoyl phosphate and aspartate to form carbamoyl aspartate and inorganic phosphate, the committed step in the de novo pyrimidine nucleotide biosynthesis pathway. This chain is Aspartate carbamoyltransferase catalytic subunit, found in Vibrio vulnificus (strain YJ016).